The following is a 147-amino-acid chain: Globin, polymeric component P2 (147 aa).

Residues 2–146 (PLTADQVAAL…ISDALVAGLE (145 aa)) form the Globin domain. A heme b-binding site is contributed by H96.

This sequence belongs to the globin family. Polymer.

This chain is Globin, polymeric component P2, found in Glycera dibranchiata (Bloodworm).